The sequence spans 358 residues: Homoserine O-acetyltransferase (358 aa).

In terms of domain architecture, AB hydrolase-1 spans 52 to 337; the sequence is NVILICHALT…DEPYGHDAFL (286 aa). Ser-148 serves as the catalytic Nucleophile. Residue Arg-217 coordinates substrate. Active-site residues include Asp-304 and His-333. Asp-334 is a substrate binding site.

It belongs to the AB hydrolase superfamily. MetX family. As to quaternary structure, homodimer.

It localises to the cytoplasm. It catalyses the reaction L-homoserine + acetyl-CoA = O-acetyl-L-homoserine + CoA. It participates in amino-acid biosynthesis; L-methionine biosynthesis via de novo pathway; O-acetyl-L-homoserine from L-homoserine: step 1/1. Its function is as follows. Transfers an acetyl group from acetyl-CoA to L-homoserine, forming acetyl-L-homoserine. The protein is Homoserine O-acetyltransferase of Chlorobium luteolum (strain DSM 273 / BCRC 81028 / 2530) (Pelodictyon luteolum).